The following is a 30-amino-acid chain: Alpha-conotoxin EIVA (30 aa).

Intrachain disulfides connect Cys2-Cys16, Cys3-Cys11, and Cys14-Cys24. 5 positions are modified to 4-hydroxyproline: Pro7, Pro13, Pro21, Pro22, and Pro27. Gly30 bears the Glycine amide mark.

As to expression, expressed by the venom duct.

The protein resides in the secreted. Its function is as follows. Alpha-conotoxins act on postsynaptic membranes, they bind to the nicotinic acetylcholine receptors (nAChR) and thus inhibit them. This toxin binds with high affinity to both fetal (alpha-1-beta-1-epsilon-delta (CHRNA1-CHRNB1-CHRND-CHRNE) subunits) and adult (alpha-1/beta-1/gamma/delta subunits) mammalian muscle nicotinic acetylcholine receptors (nAChR). This Conus ermineus (Agate cone) protein is Alpha-conotoxin EIVA.